We begin with the raw amino-acid sequence, 287 residues long: MKDRLAELQELSRSYDQQFPDGDNDFDAPREDIVFETDNILESLYRVIQDIQDENQLLLIDVRRLGRQNVRFLTSMRRLSSIKRDTNSIAKAIKTRGEGIHQKLRSMKELSEQAEARHGAHSAVARISHAQYSALARAFQQAMYEYNQAEMKQRDNCKIRIQRQLEIMGKDMSGEQIEDMFEQGKWDVFSENLLADLKGARAALNEIESRHRELLRLEGRIRDVHELFLQMAVLVEKQEDTLNVIELNVQKTLDYTGEAKAQVRKAVQYKKKNPCRTICCFCCPCVN.

Positions 41–71 form a coiled coil; it reads LESLYRVIQDIQDENQLLLIDVRRLGRQNVR. Residues 204-266 enclose the t-SNARE coiled-coil homology domain; that stretch reads LNEIESRHRE…GEAKAQVRKA (63 aa).

It belongs to the syntaxin family. As to quaternary structure, interacts with the SNARE proteins SNAP-23 and VAMP.

It is found in the membrane. It localises to the golgi apparatus. The protein localises to the trans-Golgi network membrane. SNARE that acts to regulate protein transport between late endosomes and the trans-Golgi network. The sequence is that of Syntaxin-11 (Stx11) from Mus musculus (Mouse).